The sequence spans 85 residues: UPF0213 protein NP_0776A (85 aa).

Residues 3–78 (ADHYVYVLSC…KSLSRAKKER (76 aa)) enclose the GIY-YIG domain. Residues 58-70 (KSAAMQREHEIKS) are compositionally biased toward basic and acidic residues. The tract at residues 58–85 (KSAAMQREHEIKSLSRAKKERLVADETG) is disordered.

It belongs to the UPF0213 family.

This Natronomonas pharaonis (strain ATCC 35678 / DSM 2160 / CIP 103997 / JCM 8858 / NBRC 14720 / NCIMB 2260 / Gabara) (Halobacterium pharaonis) protein is UPF0213 protein NP_0776A.